A 569-amino-acid polypeptide reads, in one-letter code: BTB/POZ domain-containing protein At3g50840 (569 aa).

The region spanning 18 to 87 is the BTB domain; it reads SDIEIEVDDI…SYGFKVDISV (70 aa). In terms of domain architecture, NPH3 spans 194 to 459; that stretch reads ELWFEDLTEL…VQVLFLEQLQ (266 aa). Positions 240-259 are enriched in low complexity; it reads ISRSSSASSSSSSSSTTIAS. The interval 240 to 261 is disordered; that stretch reads ISRSSSASSSSSSSSTTIASEN. At tyrosine 400 the chain carries Phosphotyrosine.

It belongs to the NPH3 family.

The protein operates within protein modification; protein ubiquitination. In terms of biological role, may act as a substrate-specific adapter of an E3 ubiquitin-protein ligase complex (CUL3-RBX1-BTB) which mediates the ubiquitination and subsequent proteasomal degradation of target proteins. This chain is BTB/POZ domain-containing protein At3g50840, found in Arabidopsis thaliana (Mouse-ear cress).